Reading from the N-terminus, the 77-residue chain is Sec-independent protein translocase protein TatA (77 aa).

Residues valine 3–glycine 23 traverse the membrane as a helical segment. Residues threonine 56–proline 77 form a disordered region. Over residues glutamine 63–proline 77 the composition is skewed to basic and acidic residues.

This sequence belongs to the TatA/E family. In terms of assembly, forms a complex with TatC.

The protein localises to the cell inner membrane. Its function is as follows. Part of the twin-arginine translocation (Tat) system that transports large folded proteins containing a characteristic twin-arginine motif in their signal peptide across membranes. TatA could form the protein-conducting channel of the Tat system. This Thermosynechococcus vestitus (strain NIES-2133 / IAM M-273 / BP-1) protein is Sec-independent protein translocase protein TatA.